The following is a 399-amino-acid chain: Tyrosine--tRNA ligase (399 aa).

Residues 42–51 (PTAPDLHLGH) carry the 'HIGH' region motif. The 'KMSKS' region motif lies at 226-230 (KMSKS). Lys-229 serves as a coordination point for ATP. An S4 RNA-binding domain is found at 337–398 (LPVFQVVKQA…GKRKFASVVL (62 aa)).

This sequence belongs to the class-I aminoacyl-tRNA synthetase family. TyrS type 2 subfamily. In terms of assembly, homodimer.

The protein localises to the cytoplasm. It carries out the reaction tRNA(Tyr) + L-tyrosine + ATP = L-tyrosyl-tRNA(Tyr) + AMP + diphosphate + H(+). Catalyzes the attachment of tyrosine to tRNA(Tyr) in a two-step reaction: tyrosine is first activated by ATP to form Tyr-AMP and then transferred to the acceptor end of tRNA(Tyr). This Aromatoleum aromaticum (strain DSM 19018 / LMG 30748 / EbN1) (Azoarcus sp. (strain EbN1)) protein is Tyrosine--tRNA ligase.